The chain runs to 365 residues: Aminomethyltransferase (365 aa).

Belongs to the GcvT family. The glycine cleavage system is composed of four proteins: P, T, L and H.

It catalyses the reaction N(6)-[(R)-S(8)-aminomethyldihydrolipoyl]-L-lysyl-[protein] + (6S)-5,6,7,8-tetrahydrofolate = N(6)-[(R)-dihydrolipoyl]-L-lysyl-[protein] + (6R)-5,10-methylene-5,6,7,8-tetrahydrofolate + NH4(+). The glycine cleavage system catalyzes the degradation of glycine. The chain is Aminomethyltransferase from Cronobacter sakazakii (strain ATCC BAA-894) (Enterobacter sakazakii).